Reading from the N-terminus, the 504-residue chain is Maturase K (504 aa).

The protein belongs to the intron maturase 2 family. MatK subfamily.

The protein localises to the plastid. The protein resides in the chloroplast. Functionally, usually encoded in the trnK tRNA gene intron. Probably assists in splicing its own and other chloroplast group II introns. In Thlaspi arvense (Field penny-cress), this protein is Maturase K.